Consider the following 585-residue polypeptide: Bifunctional lycopene cyclase/phytoene synthase (585 aa).

The lycopene beta-cyclase stretch occupies residues 1-243 (MGFDYAIVHV…IVFGQLAFDN (243 aa)). 7 helical membrane-spanning segments follow: residues 3-23 (FDYA…LTLL), 35-55 (KVLF…SYLI), 75-97 (IPLE…YLIL), 123-141 (LAGQ…LRVH), 151-171 (LIVV…YQFI), 173-193 (GLPW…LWLV), and 221-241 (IEEA…QLAF). Positions 250–585 (TFPALFPKPP…AWRTLNKSIA (336 aa)) are phytoene synthase.

In the N-terminal section; belongs to the lycopene beta-cyclase family. The protein in the C-terminal section; belongs to the phytoene/squalene synthase family.

It is found in the membrane. The catalysed reaction is all-trans-lycopene = gamma-carotene. The enzyme catalyses gamma-carotene = all-trans-beta-carotene. It catalyses the reaction 2 (2E,6E,10E)-geranylgeranyl diphosphate = 15-cis-phytoene + 2 diphosphate. The protein operates within carotenoid biosynthesis; beta-carotene biosynthesis. It functions in the pathway carotenoid biosynthesis; phytoene biosynthesis; all-trans-phytoene from geranylgeranyl diphosphate: step 1/1. Bifunctional enzyme that catalyzes the reactions from geranylgeranyl diphosphate to phytoene (phytoene synthase) and lycopene to beta-carotene via the intermediate gamma-carotene (lycopene cyclase). The sequence is that of Bifunctional lycopene cyclase/phytoene synthase from Phaeosphaeria nodorum (strain SN15 / ATCC MYA-4574 / FGSC 10173) (Glume blotch fungus).